The sequence spans 199 residues: Recombination protein RecR (199 aa).

The C4-type zinc finger occupies 57–72; the sequence is CEICGNMDTKNICHIC. Residues 80–175 form the Toprim domain; it reads STIAIVETVA…KISRLASGIP (96 aa).

The protein belongs to the RecR family.

Its function is as follows. May play a role in DNA repair. It seems to be involved in an RecBC-independent recombinational process of DNA repair. It may act with RecF and RecO. In Rickettsia typhi (strain ATCC VR-144 / Wilmington), this protein is Recombination protein RecR.